The primary structure comprises 565 residues: Thiol:disulfide interchange protein DsbD (565 aa).

The N-terminal stretch at 1 to 19 is a signal peptide; the sequence is MAQRIFTLILLLCSTSVFA. Cystine bridges form between Cys122/Cys128 and Cys182/Cys304. The next 7 membrane-spanning stretches (helical) occupy residues 163-183, 208-228, 243-263, 289-309, 323-343, 357-377, and 384-404; these read LPFS…TPCV, LLTF…GLVV, YVLI…FGLF, GVFI…TAPL, WLGG…LMLI, WMEQ…VFLL, and IWGL…AFIT. Residues 434 to 565 enclose the Thioredoxin domain; the sequence is WAFGETHTAQ…FSAHLRDRQP (132 aa). Cys480 and Cys483 are joined by a disulfide.

It belongs to the thioredoxin family. DsbD subfamily.

It localises to the cell inner membrane. The enzyme catalyses [protein]-dithiol + NAD(+) = [protein]-disulfide + NADH + H(+). It catalyses the reaction [protein]-dithiol + NADP(+) = [protein]-disulfide + NADPH + H(+). In terms of biological role, required to facilitate the formation of correct disulfide bonds in some periplasmic proteins and for the assembly of the periplasmic c-type cytochromes. Acts by transferring electrons from cytoplasmic thioredoxin to the periplasm. This transfer involves a cascade of disulfide bond formation and reduction steps. This is Thiol:disulfide interchange protein DsbD from Escherichia coli O6:K15:H31 (strain 536 / UPEC).